The following is a 387-amino-acid chain: Oleoyl-12-hydroxylase FAH12 (387 aa).

The disordered stretch occupies residues 1 to 34; sequence MGGGGRMSTVITSNNSEKKGGSSHLKRAPHTKPP. The next 2 membrane-spanning stretches (helical) occupy residues 61-81 and 88-108; these read AYDV…FPYI and VAWL…WVIG. Positions 109 to 113 match the Histidine box-1 motif; it reads HECGH. The chain crosses the membrane as a helical span at residues 121-141; sequence LADDIVGLIVHSALLVPYFSW. Residues 145 to 149 carry the Histidine box-2 motif; the sequence is HRRHH. Transmembrane regions (helical) follow at residues 183 to 203, 229 to 249, and 253 to 273; these read VLTL…FNVS, IYIA…ATMA, and AWVM…LVMI. Positions 319–323 match the Histidine box-3 motif; the sequence is HVAHH.

This sequence belongs to the fatty acid desaturase type 1 family. In terms of tissue distribution, expressed in seeds. Barely detected in leaves.

Its subcellular location is the microsome membrane. It carries out the reaction a 1-acyl-2-(9Z)-octadecenoyl-sn-glycero-3-phosphocholine + 2 Fe(II)-[cytochrome b5] + O2 + 2 H(+) = a 1-acyl-2-[(R)-12-hydroxyoleoyl]-sn-glycero-3-phosphocholine + 2 Fe(III)-[cytochrome b5] + H2O. The protein operates within lipid metabolism; monounsaturated fatty acid biosynthesis. Inhibited by oleoyloxyethyl phosphocholine. In terms of biological role, oleoyl-12-hydroxylase involved in the biosynthesis of ricinoleate (12-hydroxy-cis-9-octadecenoate), the major fatty acid constituent of the oil seeds from castor bean plants. Catalyzes the hydroxylation at the 12-position of 1-acyl-2-oleoyl-sn-glycero-3-phosphocholine (2-oleoyl-PC), which seems to be the actual physiological subtrate. It uses cytochrome b5 as an electron donor. May also be involved in the production of lesquerolic acid (14-hydroxyeicos-cis-ll-enoic acid) in vitro. This Ricinus communis (Castor bean) protein is Oleoyl-12-hydroxylase FAH12.